Here is a 64-residue protein sequence, read N- to C-terminus: Large ribosomal subunit protein bL35 (64 aa).

The span at 1 to 15 (MPKQKSHSGASKRFR) shows a compositional bias: basic residues. Residues 1-22 (MPKQKSHSGASKRFRVTGSGKV) form a disordered region.

The protein belongs to the bacterial ribosomal protein bL35 family.

The sequence is that of Large ribosomal subunit protein bL35 from Frankia casuarinae (strain DSM 45818 / CECT 9043 / HFP020203 / CcI3).